Here is a 320-residue protein sequence, read N- to C-terminus: Ferrochelatase (320 aa).

Residues His-194 and Glu-275 each coordinate Fe cation.

It belongs to the ferrochelatase family.

It is found in the cytoplasm. It carries out the reaction heme b + 2 H(+) = protoporphyrin IX + Fe(2+). It functions in the pathway porphyrin-containing compound metabolism; protoheme biosynthesis; protoheme from protoporphyrin-IX: step 1/1. Catalyzes the ferrous insertion into protoporphyrin IX. This is Ferrochelatase from Xylella fastidiosa (strain 9a5c).